The following is a 452-amino-acid chain: tRNA modification GTPase MnmE (452 aa).

Arginine 24, glutamate 81, and lysine 120 together coordinate (6S)-5-formyl-5,6,7,8-tetrahydrofolate. The TrmE-type G domain maps to 217-373; the sequence is GIKTAIVGKT…LIMKIEQMHI (157 aa). A K(+)-binding site is contributed by asparagine 227. GTP-binding positions include 227–232, 246–252, and 271–274; these read NVGKSS, TDIHGTT, and DTAG. Serine 231 contributes to the Mg(2+) binding site. K(+)-binding residues include threonine 246, isoleucine 248, and threonine 251. Threonine 252 provides a ligand contact to Mg(2+). Lysine 452 lines the (6S)-5-formyl-5,6,7,8-tetrahydrofolate pocket.

It belongs to the TRAFAC class TrmE-Era-EngA-EngB-Septin-like GTPase superfamily. TrmE GTPase family. Homodimer. Heterotetramer of two MnmE and two MnmG subunits. The cofactor is K(+).

Its subcellular location is the cytoplasm. Its function is as follows. Exhibits a very high intrinsic GTPase hydrolysis rate. Involved in the addition of a carboxymethylaminomethyl (cmnm) group at the wobble position (U34) of certain tRNAs, forming tRNA-cmnm(5)s(2)U34. The protein is tRNA modification GTPase MnmE of Mesoplasma florum (strain ATCC 33453 / NBRC 100688 / NCTC 11704 / L1) (Acholeplasma florum).